We begin with the raw amino-acid sequence, 56 residues long: uncharacterized protein (56 aa).

The helical transmembrane segment at 12-32 threads the bilayer; the sequence is GITLFPYFAILILILAILVVG. The hydrophobic stretch occupies residues 19 to 31; the sequence is FAILILILAILVV.

It localises to the membrane. This is an uncharacterized protein from Chenopodium amaranticolor (Quinoa).